The primary structure comprises 173 residues: Crossover junction endodeoxyribonuclease RuvC (173 aa).

Residues D8, E67, and D139 contribute to the active site. D8, E67, and D139 together coordinate Mg(2+).

The protein belongs to the RuvC family. As to quaternary structure, homodimer which binds Holliday junction (HJ) DNA. The HJ becomes 2-fold symmetrical on binding to RuvC with unstacked arms; it has a different conformation from HJ DNA in complex with RuvA. In the full resolvosome a probable DNA-RuvA(4)-RuvB(12)-RuvC(2) complex forms which resolves the HJ. It depends on Mg(2+) as a cofactor.

Its subcellular location is the cytoplasm. It carries out the reaction Endonucleolytic cleavage at a junction such as a reciprocal single-stranded crossover between two homologous DNA duplexes (Holliday junction).. The RuvA-RuvB-RuvC complex processes Holliday junction (HJ) DNA during genetic recombination and DNA repair. Endonuclease that resolves HJ intermediates. Cleaves cruciform DNA by making single-stranded nicks across the HJ at symmetrical positions within the homologous arms, yielding a 5'-phosphate and a 3'-hydroxyl group; requires a central core of homology in the junction. The consensus cleavage sequence is 5'-(A/T)TT(C/G)-3'. Cleavage occurs on the 3'-side of the TT dinucleotide at the point of strand exchange. HJ branch migration catalyzed by RuvA-RuvB allows RuvC to scan DNA until it finds its consensus sequence, where it cleaves and resolves the cruciform DNA. Its function is as follows. Plays a role in recovery after DNA ADP-ribosylation, probably via replication fork reversal. This is Crossover junction endodeoxyribonuclease RuvC from Escherichia coli O127:H6 (strain E2348/69 / EPEC).